The following is a 251-amino-acid chain: uncharacterized protein (251 aa).

Residue 12–21 (TGASSQGDIG) coordinates NADP(+). Residue serine 148 coordinates substrate. Tyrosine 161 acts as the Proton acceptor in catalysis.

Belongs to the short-chain dehydrogenases/reductases (SDR) family.

This is an uncharacterized protein from Bacillus subtilis (strain 168).